A 1406-amino-acid polypeptide reads, in one-letter code: DNA-directed RNA polymerase subunit beta' (1406 aa).

Residues cysteine 70, cysteine 72, cysteine 85, and cysteine 88 each contribute to the Zn(2+) site. Positions 460, 462, and 464 each coordinate Mg(2+). Zn(2+) contacts are provided by cysteine 814, cysteine 888, cysteine 895, and cysteine 898.

This sequence belongs to the RNA polymerase beta' chain family. In terms of assembly, the RNAP catalytic core consists of 2 alpha, 1 beta, 1 beta' and 1 omega subunit. When a sigma factor is associated with the core the holoenzyme is formed, which can initiate transcription. It depends on Mg(2+) as a cofactor. Zn(2+) serves as cofactor.

The enzyme catalyses RNA(n) + a ribonucleoside 5'-triphosphate = RNA(n+1) + diphosphate. Its function is as follows. DNA-dependent RNA polymerase catalyzes the transcription of DNA into RNA using the four ribonucleoside triphosphates as substrates. The sequence is that of DNA-directed RNA polymerase subunit beta' from Sodalis glossinidius (strain morsitans).